A 741-amino-acid chain; its full sequence is Alpha-1,6-mannosylglycoprotein 6-beta-N-acetylglucosaminyltransferase A (741 aa).

The Cytoplasmic segment spans residues 1–13 (MALFTPWKLSSQK). Residues 14-30 (LGFFLVTFGFIWGMMLL) form a helical; Signal-anchor for type II membrane protein membrane-spanning segment. The Lumenal portion of the chain corresponds to 31 to 741 (HFTIQQRTQP…GQVALCKDCL (711 aa)). N-linked (GlcNAc...) asparagine glycans are attached at residues Asn-110, Asn-115, and Asn-118. Disulfide bonds link Cys-145–Cys-183, Cys-156–Cys-196, Cys-172–Cys-338, Cys-372–Cys-626, Cys-649–Cys-724, Cys-653–Cys-726, Cys-660–Cys-713, Cys-681–Cys-702, and Cys-737–Cys-740. The segment at 213-741 (NSLAEIRTDF…GQVALCKDCL (529 aa)) is sufficient for catalytic activity. An important for activity in FGF2 release region spans residues 264–269 (KRKRKK). Asn-334 is a glycosylation site (N-linked (GlcNAc...) asparagine). A substrate-binding site is contributed by 378–379 (DS). N-linked (GlcNAc...) asparagine glycans are attached at residues Asn-433 and Asn-447. Residue Glu-526 participates in UDP-N-acetyl-alpha-D-glucosamine binding. A substrate-binding site is contributed by Lys-554.

The protein belongs to the glycosyltransferase 18 family. N-glycosylated. In terms of processing, a secreted form is released from the membrane after cleavage by gamma-secretase.

It localises to the golgi apparatus membrane. The protein resides in the secreted. The catalysed reaction is N(4)-{beta-D-GlcNAc-(1-&gt;2)-[beta-D-GlcNAc-(1-&gt;4)]-alpha-D-Man-(1-&gt;3)-[beta-D-GlcNAc-(1-&gt;2)-alpha-D-Man-(1-&gt;6)]-beta-D-Man-(1-&gt;4)-beta-D-GlcNAc-(1-&gt;4)-beta-D-GlcNAc}-L-asparaginyl-[protein] + UDP-N-acetyl-alpha-D-glucosamine = N(4)-{beta-D-GlcNAc-(1-&gt;2)-[beta-D-GlcNAc-(1-&gt;4)]-alpha-D-Man-(1-&gt;3)-[beta-D-GlcNAc-(1-&gt;2)-[beta-D-GlcNAc-(1-&gt;6)]-alpha-D-Man-(1-&gt;6)]-beta-D-Man-(1-&gt;4)-beta-D-GlcNAc-(1-&gt;4)-beta-D-GlcNAc}-L-asparaginyl-[protein] + UDP + H(+). The protein operates within protein modification; protein glycosylation. Its activity is regulated as follows. Activity is increased by Mn(2+) and Mg(2+). Functionally, catalyzes the addition of N-acetylglucosamine (GlcNAc) in beta 1-6 linkage to the alpha-linked mannose of biantennary N-linked oligosaccharides. Catalyzes an important step in the biosynthesis of branched, complex-type N-glycans, such as those found on EGFR, TGFR (TGF-beta receptor) and CDH2. Via its role in the biosynthesis of complex N-glycans, plays an important role in the activation of cellular signaling pathways, reorganization of the actin cytoskeleton, cell-cell adhesion and cell migration. MGAT5-dependent EGFR N-glycosylation enhances the interaction between EGFR and LGALS3 and thereby prevents rapid EGFR endocytosis and prolongs EGFR signaling. Required for efficient interaction between TGFB1 and its receptor. Enhances activation of intracellular signaling pathways by several types of growth factors, including FGF2, PDGF, IGF, TGFB1 and EGF. MGAT5-dependent CDH2 N-glycosylation inhibits CDH2-mediated homotypic cell-cell adhesion and contributes to the regulation of downstream signaling pathways. Promotes cell migration. Contributes to the regulation of the inflammatory response. MGAT5-dependent TCR N-glycosylation enhances the interaction between TCR and LGALS3, limits agonist-induced TCR clustering, and thereby dampens TCR-mediated responses to antigens. Required for normal leukocyte evasation and accumulation at sites of inflammation. Inhibits attachment of monocytes to the vascular endothelium and subsequent monocyte diapedesis. Promotes proliferation of umbilical vein endothelial cells and angiogenesis, at least in part by promoting the release of the growth factor FGF2 from the extracellular matrix. The sequence is that of Alpha-1,6-mannosylglycoprotein 6-beta-N-acetylglucosaminyltransferase A (MGAT5) from Homo sapiens (Human).